The chain runs to 323 residues: tRNA U34 carboxymethyltransferase (323 aa).

Carboxy-S-adenosyl-L-methionine-binding positions include Lys-91, Trp-105, Lys-110, Gly-130, 181-182, Met-196, Tyr-200, and Arg-315; that span reads IE.

This sequence belongs to the class I-like SAM-binding methyltransferase superfamily. CmoB family. In terms of assembly, homotetramer.

The enzyme catalyses carboxy-S-adenosyl-L-methionine + 5-hydroxyuridine(34) in tRNA = 5-carboxymethoxyuridine(34) in tRNA + S-adenosyl-L-homocysteine + H(+). Its function is as follows. Catalyzes carboxymethyl transfer from carboxy-S-adenosyl-L-methionine (Cx-SAM) to 5-hydroxyuridine (ho5U) to form 5-carboxymethoxyuridine (cmo5U) at position 34 in tRNAs. This is tRNA U34 carboxymethyltransferase from Edwardsiella ictaluri (strain 93-146).